Consider the following 545-residue polypeptide: CTP synthase (545 aa).

Positions Met1–Leu266 are amidoligase domain. Ser14 contacts CTP. Residue Ser14 participates in UTP binding. Residues Ser15–Ile20 and Asp72 contribute to the ATP site. Mg(2+)-binding residues include Asp72 and Glu140. CTP is bound by residues Asp147–Glu149, Lys187–Gln192, and Lys223. UTP contacts are provided by residues Lys187 to Gln192 and Lys223. Lys239–Val241 is an ATP binding site. In terms of domain architecture, Glutamine amidotransferase type-1 spans Thr291–Arg542. Gly352 provides a ligand contact to L-glutamine. Residue Cys379 is the Nucleophile; for glutamine hydrolysis of the active site. L-glutamine is bound by residues Leu380–Gln383, Glu403, and Arg470. Residues His515 and Glu517 contribute to the active site.

It belongs to the CTP synthase family. In terms of assembly, homotetramer.

It catalyses the reaction UTP + L-glutamine + ATP + H2O = CTP + L-glutamate + ADP + phosphate + 2 H(+). The catalysed reaction is L-glutamine + H2O = L-glutamate + NH4(+). It carries out the reaction UTP + NH4(+) + ATP = CTP + ADP + phosphate + 2 H(+). Its pathway is pyrimidine metabolism; CTP biosynthesis via de novo pathway; CTP from UDP: step 2/2. Its activity is regulated as follows. Allosterically activated by GTP, when glutamine is the substrate; GTP has no effect on the reaction when ammonia is the substrate. The allosteric effector GTP functions by stabilizing the protein conformation that binds the tetrahedral intermediate(s) formed during glutamine hydrolysis. Inhibited by the product CTP, via allosteric rather than competitive inhibition. Functionally, catalyzes the ATP-dependent amination of UTP to CTP with either L-glutamine or ammonia as the source of nitrogen. Regulates intracellular CTP levels through interactions with the four ribonucleotide triphosphates. The chain is CTP synthase from Aeromonas hydrophila subsp. hydrophila (strain ATCC 7966 / DSM 30187 / BCRC 13018 / CCUG 14551 / JCM 1027 / KCTC 2358 / NCIMB 9240 / NCTC 8049).